Reading from the N-terminus, the 167-residue chain is Small ribosomal subunit protein uS5 (167 aa).

Residues 12-75 form the S5 DRBM domain; it reads LQEKLVQVNR…EAARRNMIQV (64 aa).

Belongs to the universal ribosomal protein uS5 family. Part of the 30S ribosomal subunit. Contacts proteins S4 and S8.

In terms of biological role, with S4 and S12 plays an important role in translational accuracy. Located at the back of the 30S subunit body where it stabilizes the conformation of the head with respect to the body. This is Small ribosomal subunit protein uS5 from Alcanivorax borkumensis (strain ATCC 700651 / DSM 11573 / NCIMB 13689 / SK2).